Reading from the N-terminus, the 681-residue chain is Type VI secretion system spike protein VgrG2 (681 aa).

Residues 284–309 form a disordered region; the sequence is AVAGSGKSNSSALQPGQTFSLTEHPN. Residues 289–309 are compositionally biased toward polar residues; the sequence is GKSNSSALQPGQTFSLTEHPN.

The protein belongs to the VgrG protein family.

Functionally, part of the type VI secretion system specialized secretion system, which delivers several virulence factors in both prokaryotic and eukaryotic cells during infection. Plays an essential role in bacterial mobility and biofilm formation. This is Type VI secretion system spike protein VgrG2 from Aeromonas hydrophila.